We begin with the raw amino-acid sequence, 484 residues long: tRNA sulfurtransferase (484 aa).

Residues 63-167 (EAFAERLACI…NDNLYLIDKR (105 aa)) enclose the THUMP domain. ATP-binding positions include 185-186 (LI), lysine 267, glycine 289, and glutamine 298. A disulfide bond links cysteine 346 and cysteine 458. Positions 406–484 (ISAGEIIIDV…GYNNVKVYRP (79 aa)) constitute a Rhodanese domain. The active-site Cysteine persulfide intermediate is cysteine 458.

The protein belongs to the ThiI family.

Its subcellular location is the cytoplasm. It catalyses the reaction [ThiI sulfur-carrier protein]-S-sulfanyl-L-cysteine + a uridine in tRNA + 2 reduced [2Fe-2S]-[ferredoxin] + ATP + H(+) = [ThiI sulfur-carrier protein]-L-cysteine + a 4-thiouridine in tRNA + 2 oxidized [2Fe-2S]-[ferredoxin] + AMP + diphosphate. The catalysed reaction is [ThiS sulfur-carrier protein]-C-terminal Gly-Gly-AMP + S-sulfanyl-L-cysteinyl-[cysteine desulfurase] + AH2 = [ThiS sulfur-carrier protein]-C-terminal-Gly-aminoethanethioate + L-cysteinyl-[cysteine desulfurase] + A + AMP + 2 H(+). It functions in the pathway cofactor biosynthesis; thiamine diphosphate biosynthesis. Functionally, catalyzes the ATP-dependent transfer of a sulfur to tRNA to produce 4-thiouridine in position 8 of tRNAs, which functions as a near-UV photosensor. Also catalyzes the transfer of sulfur to the sulfur carrier protein ThiS, forming ThiS-thiocarboxylate. This is a step in the synthesis of thiazole, in the thiamine biosynthesis pathway. The sulfur is donated as persulfide by IscS. The sequence is that of tRNA sulfurtransferase from Shewanella pealeana (strain ATCC 700345 / ANG-SQ1).